The primary structure comprises 324 residues: Beta-ketoacyl-[acyl-carrier-protein] synthase III (324 aa).

Active-site residues include Cys111 and His251. The tract at residues 252–256 (QANTR) is ACP-binding. Asn281 is a catalytic residue.

This sequence belongs to the thiolase-like superfamily. FabH family. As to quaternary structure, homodimer.

The protein localises to the plastid. The protein resides in the chloroplast. It carries out the reaction malonyl-[ACP] + acetyl-CoA + H(+) = 3-oxobutanoyl-[ACP] + CO2 + CoA. It participates in lipid metabolism; fatty acid biosynthesis. Functionally, catalyzes the condensation reaction of fatty acid synthesis by the addition to an acyl acceptor of two carbons from malonyl-ACP. Catalyzes the first condensation reaction which initiates fatty acid synthesis and may therefore play a role in governing the total rate of fatty acid production. Possesses both acetoacetyl-ACP synthase and acetyl transacylase activities. Its substrate specificity determines the biosynthesis of branched-chain and/or straight-chain of fatty acids. This Pyropia yezoensis (Susabi-nori) protein is Beta-ketoacyl-[acyl-carrier-protein] synthase III.